Reading from the N-terminus, the 147-residue chain is Myoglobin (147 aa).

The Globin domain occupies alanine 2–glutamate 137. Histidine 60 is a nitrite binding site. Histidine 60 contributes to the O2 binding site. Heme b is bound at residue histidine 89.

The protein belongs to the globin family. Monomeric.

Its subcellular location is the cytoplasm. It is found in the sarcoplasm. The enzyme catalyses Fe(III)-heme b-[protein] + nitric oxide + H2O = Fe(II)-heme b-[protein] + nitrite + 2 H(+). The catalysed reaction is H2O2 + AH2 = A + 2 H2O. Monomeric heme protein which primary function is to store oxygen and facilitate its diffusion within muscle tissues. Reversibly binds oxygen through a pentacoordinated heme iron and enables its timely and efficient release as needed during periods of heightened demand. Depending on the oxidative conditions of tissues and cells, and in addition to its ability to bind oxygen, it also has a nitrite reductase activity whereby it regulates the production of bioactive nitric oxide. Under stress conditions, like hypoxia and anoxia, it also protects cells against reactive oxygen species thanks to its pseudoperoxidase activity. The protein is Myoglobin (mb) of Makaira nigricans (Atlantic blue marlin).